A 495-amino-acid chain; its full sequence is Carotenoid 3,4-desaturase (495 aa).

The protein belongs to the carotenoid/retinoid oxidoreductase family.

It catalyses the reaction dihydroisopentenyldehydrorhodopin + A = isopentenyldehydrorhodopin + AH2. The catalysed reaction is dihydrobisanhydrobacterioruberin + A = bisanhydrobacterioruberin + AH2. Its pathway is carotenoid biosynthesis. Functionally, involved in the biosynthesis of the acyclic C50 carotenoid bacterioruberin (BR). CrtD is involved in the desaturation reactions that form double bonds at C-3,4 of dihydroisopentenyldehydrorhodopin (DH-IDR) and C-3',4' of dihydrobisanhydrobacterioruberin (DH-BABR) to yield isopentenyld ehydrorhodopin (IDR) and bisanhydrobacterioruberin (BABR), respectively. This is Carotenoid 3,4-desaturase from Haloarcula japonica (strain ATCC 49778 / DSM 6131 / JCM 7785 / NBRC 101032 / NCIMB 13157 / TR-1).